A 374-amino-acid polypeptide reads, in one-letter code: uncharacterized protein (374 aa).

Residues 86–104 show a composition bias toward low complexity; it reads RPAATAGTTPATGASGSAR. The tract at residues 86–109 is disordered; it reads RPAATAGTTPATGASGSARPTDAA. Residues 179-354 enclose the Macro domain; the sequence is WWRRSNTTRG…LQRVVFAVHG (176 aa).

This is an uncharacterized protein from Mycobacterium tuberculosis (strain CDC 1551 / Oshkosh).